We begin with the raw amino-acid sequence, 237 residues long: Redox-sensing transcriptional repressor Rex (237 aa).

A DNA-binding region (H-T-H motif) is located at residues 45–84 (LYYRELHRLLAAGESSTNSRDLGAMVNVSPAVVRRDLSSI). Residue 119 to 124 (GVGSLG) coordinates NAD(+).

The protein belongs to the transcriptional regulatory Rex family. As to quaternary structure, homodimer.

The protein localises to the cytoplasm. Modulates transcription in response to changes in cellular NADH/NAD(+) redox state. The polypeptide is Redox-sensing transcriptional repressor Rex (Rhodopirellula baltica (strain DSM 10527 / NCIMB 13988 / SH1)).